The following is a 949-amino-acid chain: Glutamate receptor ionotropic, kainate 1 (949 aa).

The N-terminal stretch at 1–30 (MERSTVLIQPGLWTRDTSWTLLYFLCYILP) is a signal peptide. Residues 31-576 (QTSPQVLRIG…VFSFLNPLSP (546 aa)) lie on the Extracellular side of the membrane. Residues N68, N74, N276, N379, N428, N439, and N446 are each glycosylated (N-linked (GlcNAc...) asparagine). P531, T533, and R538 together coordinate L-glutamate. N-linked (GlcNAc...) asparagine glycosylation occurs at N561. Residues 577–597 (DIWMYVLLACLGVSCVLFVIA) traverse the membrane as a helical segment. Residues 598–653 (RFTPYEWYNPHPCNPDSDVVENNFTLLNSFWFGVGALMQQGSELMPKALSTRIVGG) are Cytoplasmic-facing. Residues 654-674 (IWWFFTLIIISSYTANLAAFL) traverse the membrane as a helical segment. Residues 675-834 (TVERMESPID…KEASALGVEN (160 aa)) are Extracellular-facing. Residues S704 and T705 each contribute to the L-glutamate site. Phosphoserine; by PKC is present on S725. E753 is a binding site for L-glutamate. Phosphothreonine; by PKC is present on T761. C765 and C819 form a disulfide bridge. N-linked (GlcNAc...) asparagine glycosylation occurs at N766. Residues 835-855 (IGGIFIVLAAGLVLSVFVAIG) form a helical membrane-spanning segment. Residues 856 to 949 (EFLYKSRKNN…RRTQRKETVA (94 aa)) lie on the Cytoplasmic side of the membrane.

It belongs to the glutamate-gated ion channel (TC 1.A.10.1) family. GRIK1 subfamily. Homotetramer or heterotetramer of pore-forming glutamate receptor subunits. Tetramers may be formed by the dimerization of dimers. Can form functional heteromeric receptors with GRIK4 and GRIK5. Interacts with KLHL17. As to expression, expressed in the olfactory bulb (at protein level). Expressed in subsets of neurons throughout the developing and adult central and peripheral nervous systems. In the CNS principally in the medial amygdaloid nuclei, medial habenulae, pyriform and cingulate cortices, and Purkinje cell layer. Also highly expressed in embryonic and adult dorsal root ganglia. Expressed at high levels in the trigeminal ganglion neurons.

The protein localises to the cell membrane. It localises to the postsynaptic cell membrane. The enzyme catalyses Ca(2+)(in) = Ca(2+)(out). Functionally, ionotropic glutamate receptor that functions as a cation-permeable ligand-gated ion channel, gated by L-glutamate and the glutamatergic agonist kainic acid. L-glutamate acts as an excitatory neurotransmitter at many synapses in the central nervous system. Binding of the excitatory neurotransmitter L-glutamate induces a conformation change, leading to the opening of the cation channel, and thereby converts the chemical signal to an electrical impulse. The receptor then desensitizes rapidly and enters a transient inactive state, characterized by the presence of bound agonist. The protein is Glutamate receptor ionotropic, kainate 1 (Grik1) of Rattus norvegicus (Rat).